The sequence spans 506 residues: 2-isopropylmalate synthase (506 aa).

A Pyruvate carboxyltransferase domain is found at 4 to 266 (ILFMDTTLRD…EPSMTLKEIK (263 aa)). Residues D13, H201, H203, and N237 each contribute to the Mn(2+) site. The segment at 390-506 (NITQLQVHFV…KLKSFIQLVK (117 aa)) is regulatory domain.

The protein belongs to the alpha-IPM synthase/homocitrate synthase family. LeuA type 1 subfamily. Homodimer. Requires Mn(2+) as cofactor.

It localises to the cytoplasm. The catalysed reaction is 3-methyl-2-oxobutanoate + acetyl-CoA + H2O = (2S)-2-isopropylmalate + CoA + H(+). Its pathway is amino-acid biosynthesis; L-leucine biosynthesis; L-leucine from 3-methyl-2-oxobutanoate: step 1/4. In terms of biological role, catalyzes the condensation of the acetyl group of acetyl-CoA with 3-methyl-2-oxobutanoate (2-ketoisovalerate) to form 3-carboxy-3-hydroxy-4-methylpentanoate (2-isopropylmalate). In Bacillus cereus (strain AH820), this protein is 2-isopropylmalate synthase.